Here is a 125-residue protein sequence, read N- to C-terminus: Phosphoribosyl-AMP cyclohydrolase (125 aa).

Aspartate 74 is a binding site for Mg(2+). A Zn(2+)-binding site is contributed by cysteine 75. Aspartate 76 and aspartate 78 together coordinate Mg(2+). Residues cysteine 92 and cysteine 99 each contribute to the Zn(2+) site.

Belongs to the PRA-CH family. Homodimer. Requires Mg(2+) as cofactor. Zn(2+) is required as a cofactor.

The protein resides in the cytoplasm. The enzyme catalyses 1-(5-phospho-beta-D-ribosyl)-5'-AMP + H2O = 1-(5-phospho-beta-D-ribosyl)-5-[(5-phospho-beta-D-ribosylamino)methylideneamino]imidazole-4-carboxamide. It participates in amino-acid biosynthesis; L-histidine biosynthesis; L-histidine from 5-phospho-alpha-D-ribose 1-diphosphate: step 3/9. Catalyzes the hydrolysis of the adenine ring of phosphoribosyl-AMP. The chain is Phosphoribosyl-AMP cyclohydrolase from Geobacter sp. (strain M21).